A 274-amino-acid chain; its full sequence is Ribosomal RNA small subunit methyltransferase A (274 aa).

Residues His15, Leu17, Gly42, Glu64, Asp89, and Asn109 each contribute to the S-adenosyl-L-methionine site.

It belongs to the class I-like SAM-binding methyltransferase superfamily. rRNA adenine N(6)-methyltransferase family. RsmA subfamily.

The protein resides in the cytoplasm. It catalyses the reaction adenosine(1518)/adenosine(1519) in 16S rRNA + 4 S-adenosyl-L-methionine = N(6)-dimethyladenosine(1518)/N(6)-dimethyladenosine(1519) in 16S rRNA + 4 S-adenosyl-L-homocysteine + 4 H(+). Its function is as follows. Specifically dimethylates two adjacent adenosines (A1518 and A1519) in the loop of a conserved hairpin near the 3'-end of 16S rRNA in the 30S particle. May play a critical role in biogenesis of 30S subunits. This chain is Ribosomal RNA small subunit methyltransferase A, found in Synechococcus sp. (strain CC9902).